The primary structure comprises 778 residues: Double zinc ribbon and ankyrin repeat-containing protein 1 (778 aa).

Serine 179 and serine 201 each carry phosphoserine. 2 consecutive DZANK-type zinc fingers follow at residues 230 to 289 and 359 to 407; these read CAHC…CVVC and CSRC…GSCG. 2 ANK repeats span residues 631-662 and 666-695; these read ENKL…DPNC and QGRP…DIDQ. Phosphoserine is present on serine 768.

As to quaternary structure, interacts with NINL. Associates with DYNC1H1 and multiple dynein intermediate and light chains as well as actin-binding proteins.

The protein resides in the cytoplasm. It is found in the cytoskeleton. Its subcellular location is the microtubule organizing center. The protein localises to the centrosome. It localises to the cilium basal body. Involved in vesicle transport in photoreceptor cells. This chain is Double zinc ribbon and ankyrin repeat-containing protein 1 (Dzank1), found in Mus musculus (Mouse).